The sequence spans 83 residues: uncharacterized protein (83 aa).

The protein belongs to the BolA/IbaG family.

This is an uncharacterized protein from Acinetobacter guillouiae (Acinetobacter genomosp. 11).